A 496-amino-acid chain; its full sequence is Probable cytosol aminopeptidase (496 aa).

Mn(2+) is bound by residues Lys266 and Asp271. Lys278 is a catalytic residue. Mn(2+) is bound by residues Asp289, Asp348, and Glu350. Arg352 is an active-site residue.

This sequence belongs to the peptidase M17 family. The cofactor is Mn(2+).

It is found in the cytoplasm. It catalyses the reaction Release of an N-terminal amino acid, Xaa-|-Yaa-, in which Xaa is preferably Leu, but may be other amino acids including Pro although not Arg or Lys, and Yaa may be Pro. Amino acid amides and methyl esters are also readily hydrolyzed, but rates on arylamides are exceedingly low.. The catalysed reaction is Release of an N-terminal amino acid, preferentially leucine, but not glutamic or aspartic acids.. Presumably involved in the processing and regular turnover of intracellular proteins. Catalyzes the removal of unsubstituted N-terminal amino acids from various peptides. This is Probable cytosol aminopeptidase from Pseudomonas syringae pv. tomato (strain ATCC BAA-871 / DC3000).